Consider the following 265-residue polypeptide: Type II pantothenate kinase (265 aa).

Position 6–13 (6–13 (DAGGTLIK)) interacts with ATP. Glutamate 70 (proton acceptor) is an active-site residue. Residues threonine 99, 121–125 (GGMIQ), tyrosine 137, and serine 225 contribute to the ATP site.

Belongs to the type II pantothenate kinase family. As to quaternary structure, homodimer.

The protein localises to the cytoplasm. The catalysed reaction is (R)-pantothenate + ATP = (R)-4'-phosphopantothenate + ADP + H(+). It participates in cofactor biosynthesis; coenzyme A biosynthesis; CoA from (R)-pantothenate: step 1/5. Its function is as follows. Catalyzes the phosphorylation of pantothenate (Pan), the first step in CoA biosynthesis. The sequence is that of Type II pantothenate kinase from Staphylococcus saprophyticus subsp. saprophyticus (strain ATCC 15305 / DSM 20229 / NCIMB 8711 / NCTC 7292 / S-41).